The primary structure comprises 738 residues: Protein ALEX (738 aa).

Disordered stretches follow at residues 1–105, 155–188, 237–350, 387–516, 528–578, and 611–689; these read MSPS…EEAM, REDY…ASHA, TTFP…LPKP, MSGQ…LGQP, GEPG…LDPP, and GMRL…RPRI. Residues 257-273 are compositionally biased toward polar residues; sequence GSTTTPLSIWTAPQSQV. Basic and acidic residues predominate over residues 279 to 301; that stretch reads KSREPQLRASTQRDPHLSDKQPR. Over residues 387–396 the composition is skewed to polar residues; that stretch reads MSGQNQTEGQ. Pro residues-rich tracts occupy residues 410–438, 448–467, and 476–485; these read QPPP…PPSQ, PSLP…PRQP, and PGQPPSPLRS. Composition is skewed to low complexity over residues 542-564, 615-626, and 656-671; these read PSLP…LPAG, RPASARSSPPAM, and ATRS…EAAS.

It belongs to the ALEX family. Interacts with the N-terminal region of the XLas isoforms of guanine nucleotide-binding protein G(s) subunit alpha.

It is found in the cell membrane. The protein localises to the cell projection. The protein resides in the ruffle. Functionally, may inhibit the adenylyl cyclase-stimulating activity of guanine nucleotide-binding protein G(s) subunit alpha which is produced from the same locus in a different open reading frame. This is Protein ALEX from Rattus norvegicus (Rat).